The primary structure comprises 290 residues: MKSGFVSIVGRTNAGKSSILNSLLEEKIAMVSHKQNATRRKINAIIMHEKNQVIFIDTPGLHASSKAINQLMIDLAIKSIADCDVILFVASIYDDIIDYENFLKLNPKVPHIVLINKVDLADKKTLLSKLAQYNQFSSYFSAIIPYSIKQKFHKKILLDELVKYLPEHPYYFDPEFITTTNEKDIYRDFILEAIYENLSDEIPYTTEVRIDKIKELKTIYYINATIISSTNSHKGMILGKDGATIKRIGKEARVKIEKLAQKKVMLKLFVQLEKNWHKNEQNLKKILYDE.

Residues 2–167 (KSGFVSIVGR…LDELVKYLPE (166 aa)) form the Era-type G domain. The segment at 10–17 (GRTNAGKS) is G1. 10 to 17 (GRTNAGKS) lines the GTP pocket. A G2 region spans residues 36–40 (NATRR). The interval 57–60 (DTPG) is G3. Residues 57-61 (DTPGL) and 116-119 (NKVD) contribute to the GTP site. The segment at 116 to 119 (NKVD) is G4. The tract at residues 146–148 (YSI) is G5. One can recognise a KH type-2 domain in the interval 194 to 274 (IYENLSDEIP…MLKLFVQLEK (81 aa)).

The protein belongs to the TRAFAC class TrmE-Era-EngA-EngB-Septin-like GTPase superfamily. Era GTPase family. As to quaternary structure, monomer.

The protein resides in the cytoplasm. Its subcellular location is the cell inner membrane. Its function is as follows. An essential GTPase that binds both GDP and GTP, with rapid nucleotide exchange. Plays a role in 16S rRNA processing and 30S ribosomal subunit biogenesis and possibly also in cell cycle regulation and energy metabolism. In Campylobacter lari (strain RM2100 / D67 / ATCC BAA-1060), this protein is GTPase Era.